A 1063-amino-acid chain; its full sequence is E3 ubiquitin-protein ligase PDZRN3 (1063 aa).

Residues 18 to 56 (CALCHKVLEDPLTTPCGHVFCAGCVLPWVVQEGSCPARC) form an RING-type; degenerate zinc finger. The segment at 100–158 (EHLERCDFAPARCRHAGCGQLLLRRDVEAHMRDACDARPVGRCQEGCGLPLTHGEQRAG) adopts a TRAF-type zinc-finger fold. PDZ domains lie at 249 to 339 (TLVL…LRRT) and 419 to 503 (EVGL…IARP). Ser-427 bears the Phosphoserine mark. The disordered stretch occupies residues 545–602 (QKKHEEDGGTTDTATILSNQHEKDSGVGRTDESTRNDESSEQENNGEDATASANPLAG). Positions 554–563 (TTDTATILSN) are enriched in polar residues. Basic and acidic residues predominate over residues 564-582 (QHEKDSGVGRTDESTRNDE). A coiled-coil region spans residues 680-705 (ESVDKELELLNEELRSIELECLSIVR). The span at 746 to 755 (ELPEKSDKDS) shows a compositional bias: basic and acidic residues. 2 disordered regions span residues 746-798 (ELPE…IEAY) and 834-853 (IKERRGSDGSRSPTASPKLG). Residues 756-770 (SSAYNTGESCRSTPL) are compositionally biased toward polar residues.

As to quaternary structure, interacts with NLGN1 and EFNB2. Interacts with UBE2D2 and with MUSK via the first PDZ domain. In myotubes, the interaction between PDZRN3 and MUSK is enhanced upon agrin stimulation. Auto-ubiquitinated. As to expression, highly expressed in skeletal and cardiac muscle and at lower levels in spinal cord and brain (at protein level). Also expressed in kidney and lung. In muscles, concentrated at the neuromuscular junction (NMJ).

It localises to the synapse. Its subcellular location is the cytoplasm. The catalysed reaction is S-ubiquitinyl-[E2 ubiquitin-conjugating enzyme]-L-cysteine + [acceptor protein]-L-lysine = [E2 ubiquitin-conjugating enzyme]-L-cysteine + N(6)-ubiquitinyl-[acceptor protein]-L-lysine.. Its pathway is protein modification; protein ubiquitination. Its function is as follows. E3 ubiquitin-protein ligase. Plays an important role in regulating the surface level of MUSK on myotubes. Mediates the ubiquitination of MUSK, promoting its endocytosis and lysosomal degradation. Might contribute to terminal myogenic differentiation. This chain is E3 ubiquitin-protein ligase PDZRN3 (Pdzrn3), found in Mus musculus (Mouse).